Here is a 437-residue protein sequence, read N- to C-terminus: Cobyrinate a,c-diamide synthase (437 aa).

In terms of domain architecture, GATase cobBQ-type spans 243–433; that stretch reads IAAIAYDSAF…SHFHFSSARG (191 aa). Cys324 acts as the Nucleophile in catalysis.

Belongs to the CobB/CbiA family. Mg(2+) serves as cofactor.

The catalysed reaction is cob(II)yrinate + 2 L-glutamine + 2 ATP + 2 H2O = cob(II)yrinate a,c diamide + 2 L-glutamate + 2 ADP + 2 phosphate + 2 H(+). The protein operates within cofactor biosynthesis; adenosylcobalamin biosynthesis; cob(II)yrinate a,c-diamide from sirohydrochlorin (anaerobic route): step 10/10. Its function is as follows. Catalyzes the ATP-dependent amidation of the two carboxylate groups at positions a and c of cobyrinate, using either L-glutamine or ammonia as the nitrogen source. This Sulfurisphaera tokodaii (strain DSM 16993 / JCM 10545 / NBRC 100140 / 7) (Sulfolobus tokodaii) protein is Cobyrinate a,c-diamide synthase.